The primary structure comprises 868 residues: Leucine--tRNA ligase (868 aa).

Positions 42–52 (PYPSGKLHMGH) match the 'HIGH' region motif. Residues 627 to 631 (KMSKS) carry the 'KMSKS' region motif. Residue Lys-630 participates in ATP binding.

Belongs to the class-I aminoacyl-tRNA synthetase family.

Its subcellular location is the cytoplasm. The enzyme catalyses tRNA(Leu) + L-leucine + ATP = L-leucyl-tRNA(Leu) + AMP + diphosphate. This Pseudomonas entomophila (strain L48) protein is Leucine--tRNA ligase.